Consider the following 460-residue polypeptide: DL-alanine permease SerP2 (460 aa).

Transmembrane regions (helical) follow at residues 26–46, 47–67, 98–118, 124–144, 160–180, 209–229, 246–266, 278–298, 344–364, 368–388, 410–430, and 433–453; these read LIAI…KSIH, LTGP…YILL, FIQW…LIAI, FWLP…LLTL, FGMI…ILIF, FFES…IGMT, QIPI…MSIY, FVTI…NFVV, ALLF…IPAI, FVFI…MTLI, HIFI…LFCF, and TIIP…FTFF.

It belongs to the amino acid-polyamine-organocation (APC) superfamily. Amino acid transporter (AAT) (TC 2.A.3.1) family.

It is found in the cell membrane. In terms of biological role, transports DL-alanine, DL-serine and glycine. The preferred substrate is DL-alanine. L-serine is a low-affinity substrate. This Lactococcus lactis subsp. cremoris (strain MG1363) protein is DL-alanine permease SerP2.